Consider the following 33-residue polypeptide: Photosystem II reaction center protein T (33 aa).

A helical transmembrane segment spans residues 3–23 (ALVYTFLLVSTLGILFFSIFF).

Belongs to the PsbT family. In terms of assembly, PSII is composed of 1 copy each of membrane proteins PsbA, PsbB, PsbC, PsbD, PsbE, PsbF, PsbH, PsbI, PsbJ, PsbK, PsbL, PsbM, PsbT, PsbY, PsbZ, Psb30/Ycf12, at least 3 peripheral proteins of the oxygen-evolving complex and a large number of cofactors. It forms dimeric complexes.

The protein localises to the plastid. It is found in the chloroplast thylakoid membrane. In terms of biological role, found at the monomer-monomer interface of the photosystem II (PS II) dimer, plays a role in assembly and dimerization of PSII. PSII is a light-driven water plastoquinone oxidoreductase, using light energy to abstract electrons from H(2)O, generating a proton gradient subsequently used for ATP formation. This chain is Photosystem II reaction center protein T, found in Pelargonium hortorum (Common geranium).